The chain runs to 677 residues: Beta-galactosidase BgaA (677 aa).

Arg112 contacts substrate. Cys116 is a binding site for Zn(2+). Asn150 is a binding site for substrate. Glu151 serves as the catalytic Proton donor. Zn(2+) contacts are provided by Cys156, Cys158, and Cys161. The Nucleophile role is filled by Glu309. Residues Trp317 and 357 to 360 (EKYH) contribute to the substrate site.

It belongs to the glycosyl hydrolase 42 family. In terms of assembly, dimer.

The enzyme catalyses Hydrolysis of terminal non-reducing beta-D-galactose residues in beta-D-galactosides.. No activity is lost during treatment with 20 or 100 mM EDTA in Z buffer for 3 hours at 0 degrees Celsius, nor is activity greatly stimulated by the addition of cations. Inhibited by 1 mM zinc and 1 mM copper, the levels of activity decrease to 10% of the untreated control. Nickel, cobalt and manganese at concentrations of 10 mM decrease enzyme activity to either 40% (for nickel and cobalt) or 60% (for manganese) of the activity in untreated controls. No change in enzyme activity in the presence of calcium and magnesium at concentrations up to 50 mM. EDTA-treated enzyme exhibits a slight increase in relative specific activity when it is assayed in the presence of 50 mM NaCl or 50 mM KCl, it does not exhibit enhanced activity at concentrations greater than 250 mM. Maintains between 20 and 40% of activity in the presence of 4 M NaCl or 4 M KCl, and it is more active in the presence of KCl than in the presence of NaCl. Retains 50% of activity in the presence of 3 M KCl or 2.5 M NaCl. Functionally, hydrolyzes o-nitrophenyl-beta-D-galactopyranoside (ONPG), p-nitrophenyl-beta-D-galactopyranoside (PNPG), 5-bromo-4-chloro-3-indoyl-beta-D-galactosde (X-gal), o-nitrophenyl-beta-D-fucopyranoside (ONPF) and p-nitrophenyl-beta-D-fucopyranoside (PNPF) with greatest activity towards ONPG and PNPG and low levels of activity with ONPF and PNPF. Detectable, but very low levels of activity towards p-nitrophenyl-beta-lactose (PNPL), p-nitrophenyl-beta-cellobiose (PNPC), p-nitrophenyl-alpha-galactopyranoside (PNP-alpha-G), and p-nitrophenyl-beta-xylopyranoside (PNPX). The sequence is that of Beta-galactosidase BgaA from Planococcus sp. (strain 'SOS Orange').